The chain runs to 100 residues: Small ribosomal subunit protein uS14c (100 aa).

The protein belongs to the universal ribosomal protein uS14 family. In terms of assembly, part of the 30S ribosomal subunit.

Its subcellular location is the plastid. The protein resides in the chloroplast. Its function is as follows. Binds 16S rRNA, required for the assembly of 30S particles. The chain is Small ribosomal subunit protein uS14c from Platanus occidentalis (Sycamore).